The chain runs to 73 residues: Large ribosomal subunit protein bL31 (73 aa).

It belongs to the bacterial ribosomal protein bL31 family. Type A subfamily. Part of the 50S ribosomal subunit.

Functionally, binds the 23S rRNA. The chain is Large ribosomal subunit protein bL31 (rpmE) from Ruegeria pomeroyi (strain ATCC 700808 / DSM 15171 / DSS-3) (Silicibacter pomeroyi).